The chain runs to 359 residues: 4-hydroxyproline 2-epimerase (359 aa).

The active-site Proton acceptor is the Cys126. Residues 127-128 (GH), His248, and Asp274 contribute to the substrate site. Cys278 (proton donor) is an active-site residue. 279 to 280 (GT) provides a ligand contact to substrate.

The protein belongs to the proline racemase family.

The catalysed reaction is trans-4-hydroxy-L-proline = cis-4-hydroxy-D-proline. Its function is as follows. Catalyzes the epimerization of trans-4-hydroxy-L-proline (t4LHyp) to cis-4-hydroxy-D-proline (c4DHyp). Is likely involved in a degradation pathway that converts t4LHyp to alpha-ketoglutarate. Displays no proline racemase activity. The polypeptide is 4-hydroxyproline 2-epimerase (Planctopirus limnophila (strain ATCC 43296 / DSM 3776 / IFAM 1008 / Mu 290) (Planctomyces limnophilus)).